A 92-amino-acid polypeptide reads, in one-letter code: Kinetoplastid membrane protein 11C (92 aa).

Belongs to the KMP-11 family. Monomer.

The protein resides in the cytoplasm. It is found in the cytoskeleton. Its subcellular location is the cell projection. It localises to the cilium. The protein localises to the flagellum. In terms of biological role, may be involved in the regulation of the cytoskeleton through interaction with the subpellicular microtubules. May be involved in parasite mobility and attachment to the surface of the host cell. Behaves as a strong immunogen during infection. This is Kinetoplastid membrane protein 11C (KMP-11C) from Leishmania infantum.